Reading from the N-terminus, the 107-residue chain is Universal stress protein B homolog (107 aa).

2 helical membrane-spanning segments follow: residues 6 to 23 and 89 to 106; these read TILF…ARYF and LFIL…SSFI.

This sequence belongs to the universal stress protein B family.

It localises to the cell inner membrane. This chain is Universal stress protein B homolog, found in Vibrio atlanticus (strain LGP32) (Vibrio splendidus (strain Mel32)).